Reading from the N-terminus, the 398-residue chain is Basic helix-loop-helix neural transcription factor TAP (398 aa).

Disordered regions lie at residues 35–59 (ETEAQLSSRRRLDFGTPPTPAIPQP) and 102–144 (RATN…RSRS). The segment covering 127-141 (RPKRKYAVGKNRVTR) has biased composition (basic residues). Residues 154-206 (FRRMKANDRERNRMHNLNDALEKLRVTLPSLPEETKLTKIEILRFAHNYIFAL) enclose the bHLH domain. 2 disordered regions span residues 265 to 333 (AQHQ…QQFS) and 361 to 398 (QQSSFYSQTPPWKDYPEDQAHVHPVPHQHSYKNFAPQV). The segment covering 307–333 (HQQQQQPHQPHHLQPNPQQESSPQQFS) has biased composition (low complexity). Over residues 361–370 (QQSSFYSQTP) the composition is skewed to polar residues.

As to expression, expressed in neuronal and glial precursors during differentiation. In the peripheral nervous system, expression is exclusively in one of the neurons that innervate each larval chemosensory organ. Expressed at a late stage in the development of one type of adult chemosensory organ, the gustatory bristles of the leg, wing and proboscis. Expressed very early in the development of a second type of chemosensory receptors, the olfactory organs of the antenna.

The protein localises to the nucleus. Functionally, may play a role in the specification of the sugar-sensitive adult gustatory neuron and affect the response to sugar and salt. Regulated by POXN. This chain is Basic helix-loop-helix neural transcription factor TAP (tap), found in Drosophila melanogaster (Fruit fly).